A 585-amino-acid polypeptide reads, in one-letter code: MAGUK p55 subfamily member 3 (585 aa).

2 consecutive L27 domains span residues 6–60 (EDSG…ERQS) and 61–118 (PTPV…FDPV). The PDZ domain maps to 137–212 (IVRLVKNKEP…LAQSQGSITL (76 aa)). The 71-residue stretch at 226–296 (ESKVFMRALF…PSKGFQERRL (71 aa)) folds into the SH3 domain. S307 carries the post-translational modification Phosphoserine. The Guanylate kinase-like domain occupies 385–570 (PRLVVLIGSL…AYSQLKVVLE (186 aa)).

Belongs to the MAGUK family. In terms of assembly, interacts with HTR2C; this interaction stabilizes the receptor at the plasma membrane and prevents the desensitization of the HTR2C receptor-mediated calcium response. Interacts with HTR2A. Interacts with HTR4. Interacts (via PDZ domain) with CADM1 (via C-terminus)Interacts (via PDZ domain) with CADM1; this interaction connects CADM1 with DLG1. Interacts (via Guanylate kinase-like domain) with PALS1. Interacts with DLG1 (via N-terminus); this interaction connects CADM1 with DLG1 and links CADM1 with the regulatory subunit of phosphoinositide-3-kinase (PI3K) by forming a multiprotein complex and participates in cell spreading. Expressed in retina (at protein level) at the subapical region (SAR) adjacent to adherens junctions at the OLM, and at the OPL.

The protein resides in the cell membrane. The protein localises to the apical cell membrane. It is found in the cell junction. It localises to the adherens junction. In terms of biological role, participates in cell spreading through the phosphoinositide-3-kinase (PI3K) pathway by connecting CADM1 to DLG1 and the regulatory subunit of phosphoinositide-3-kinase (PI3K). Stabilizes HTR2C at the plasma membrane and prevents its desensitization. May participates in the maintenance of adherens junctions. This chain is MAGUK p55 subfamily member 3, found in Homo sapiens (Human).